We begin with the raw amino-acid sequence, 448 residues long: MILNDDVKLIPGSKVEAVIKISKEFVKGKYNEILQDYSSRLKIKGFRIGKVPFSIIEGKYSDNIRALTIEKLIHKSLEEFFKSATYKPLGYAVPKILDEKLEIDFNKDFEFTVVYEAYPEFEIPDISNVEVEIPEVTVSDSDVEDELKLLQLENAMVVDDSGDVKVGSIVRVDFVELDDSLSEILTTKRQDFVFTVGESNNYYGFDNDIIGMKKDEEKIIEKNYSADYKFSELANSFKRLKIIIKDIKKRDIPELDDDFAKDIKDSFNTLEELKAHIRENMLRLVKEKRESLKLSKLLSDVSEKLNIEIPSAMFEAELKNVVNEFSTQNKIDLKKLNDSSMGLEGVSDVFKENVLKKLKSKLVFQKIVDNDLTEITDADLEDELVKQAEDTKMRLSEIKKFYQEKNLLGILKDEIKRQKVKDKILKNVKEIKLKEIAFRDFINYKTGE.

In terms of domain architecture, PPIase FKBP-type spans 167–253 (GSIVRVDFVE…IKDIKKRDIP (87 aa)).

Belongs to the FKBP-type PPIase family. Tig subfamily.

It is found in the cytoplasm. It carries out the reaction [protein]-peptidylproline (omega=180) = [protein]-peptidylproline (omega=0). In terms of biological role, involved in protein export. Acts as a chaperone by maintaining the newly synthesized protein in an open conformation. Functions as a peptidyl-prolyl cis-trans isomerase. The polypeptide is Trigger factor (Borrelia hermsii (strain HS1 / DAH)).